Consider the following 549-residue polypeptide: Oxygen-dependent choline dehydrogenase (549 aa).

Aspartate 4–glutamate 33 is an FAD binding site. The active-site Proton acceptor is the histidine 465.

The protein belongs to the GMC oxidoreductase family. The cofactor is FAD.

It catalyses the reaction choline + A = betaine aldehyde + AH2. It carries out the reaction betaine aldehyde + NAD(+) + H2O = glycine betaine + NADH + 2 H(+). The protein operates within amine and polyamine biosynthesis; betaine biosynthesis via choline pathway; betaine aldehyde from choline (cytochrome c reductase route): step 1/1. In terms of biological role, involved in the biosynthesis of the osmoprotectant glycine betaine. Catalyzes the oxidation of choline to betaine aldehyde and betaine aldehyde to glycine betaine at the same rate. This chain is Oxygen-dependent choline dehydrogenase, found in Brucella ovis (strain ATCC 25840 / 63/290 / NCTC 10512).